Reading from the N-terminus, the 60-residue chain is uncharacterized protein (60 aa).

This is an uncharacterized protein from Escherichia coli O157:H7.